Reading from the N-terminus, the 256-residue chain is Putative transcription factor 001R (256 aa).

In terms of biological role, transcription activation. The protein is Putative transcription factor 001R of Frog virus 3 (isolate Goorha) (FV-3).